The chain runs to 241 residues: 7-cyano-7-deazaguanine synthase (241 aa).

15–25 is a binding site for ATP; that stretch reads FSGGQDSTTTL. Zn(2+) is bound by residues Cys203, Cys218, Cys221, and Cys224.

The protein belongs to the QueC family. Zn(2+) serves as cofactor.

The enzyme catalyses 7-carboxy-7-deazaguanine + NH4(+) + ATP = 7-cyano-7-deazaguanine + ADP + phosphate + H2O + H(+). The protein operates within purine metabolism; 7-cyano-7-deazaguanine biosynthesis. Its function is as follows. Catalyzes the ATP-dependent conversion of 7-carboxy-7-deazaguanine (CDG) to 7-cyano-7-deazaguanine (preQ(0)). This Azorhizobium caulinodans (strain ATCC 43989 / DSM 5975 / JCM 20966 / LMG 6465 / NBRC 14845 / NCIMB 13405 / ORS 571) protein is 7-cyano-7-deazaguanine synthase.